The following is a 61-amino-acid chain: Small ribosomal subunit protein bS21 (61 aa).

Residues 34 to 61 form a disordered region; that stretch reads KREHYESPSVKRKKKSEAARKRKYKYNK. Positions 43 to 61 are enriched in basic residues; sequence VKRKKKSEAARKRKYKYNK.

Belongs to the bacterial ribosomal protein bS21 family.

This chain is Small ribosomal subunit protein bS21, found in Thermoanaerobacter pseudethanolicus (strain ATCC 33223 / 39E) (Clostridium thermohydrosulfuricum).